The primary structure comprises 30 residues: Bacteriocin curvaticin (30 aa).

A disulfide bond links cysteine 9 and cysteine 14.

Its subcellular location is the secreted. Has antibacterial activity against the Gram-positive bacterium L.monocytogenes. In Latilactobacillus curvatus (Lactobacillus curvatus), this protein is Bacteriocin curvaticin.